The following is a 92-amino-acid chain: Long neurotoxin 469 (92 aa).

Positions 1-21 are cleaved as a signal peptide; that stretch reads MKTLLLTLVVVTIVCLDLGDS. Disulfide bonds link Cys-24–Cys-41, Cys-34–Cys-62, Cys-47–Cys-51, Cys-66–Cys-77, and Cys-78–Cys-83.

The protein belongs to the three-finger toxin family. Long-chain subfamily. Type II alpha-neurotoxin sub-subfamily. As to expression, expressed by the venom gland.

The protein localises to the secreted. Its function is as follows. Binds with high affinity to muscular (alpha-1/CHRNA1) and neuronal (alpha-7/CHRNA7) nicotinic acetylcholine receptor (nAChR) and inhibits acetylcholine from binding to the receptor, thereby impairing neuromuscular and neuronal transmission. The polypeptide is Long neurotoxin 469 (Drysdalia coronoides (White-lipped snake)).